The sequence spans 597 residues: Leishmanolysin (597 aa).

Positions 1-39 (MSVDSSSTHRHRCVAARLVPLAAAGAAVTVAVGTAAAWA) are cleaved as a signal peptide. The propeptide at 40 to 99 (HAGAVQHRCIHDAMQARVRQSVAAQRMAPSAVSAVGLPHVTLDAGNTAAGADPSTGTANV) is activation peptide. Cystine bridges form between Cys-124–Cys-141 and Cys-190–Cys-229. Residue His-263 participates in Zn(2+) binding. The active site involves Glu-264. A Zn(2+)-binding site is contributed by His-267. Asn-299 is a glycosylation site (N-linked (GlcNAc...) asparagine). Intrachain disulfides connect Cys-313–Cys-383, Cys-390–Cys-452, Cys-403–Cys-422, Cys-412–Cys-486, Cys-463–Cys-507, Cys-512–Cys-562, and Cys-532–Cys-555. His-332 contacts Zn(2+). N-linked (GlcNAc...) asparagine glycosylation is present at Asn-404. The GPI-anchor amidated asparagine moiety is linked to residue Asn-574. Positions 575–597 (AAGRRGPRAATALVVAALLAVAL) are cleaved as a propeptide — removed in mature form.

Belongs to the peptidase M8 family. Zn(2+) is required as a cofactor.

The protein localises to the cell membrane. The enzyme catalyses Preference for hydrophobic residues at P1 and P1' and basic residues at P2' and P3'. A model nonapeptide is cleaved at -Ala-Tyr-|-Leu-Lys-Lys-.. Its function is as follows. Has an integral role during the infection of macrophages in the mammalian host. The polypeptide is Leishmanolysin (gp63) (Leishmania amazonensis).